Reading from the N-terminus, the 442-residue chain is Tubulin beta chain (442 aa).

The GTP site is built by Gln11, Glu69, Ser138, Gly142, Thr143, Gly144, Asn204, and Asn226. Glu69 contacts Mg(2+).

It belongs to the tubulin family. Dimer of alpha and beta chains. A typical microtubule is a hollow water-filled tube with an outer diameter of 25 nm and an inner diameter of 15 nM. Alpha-beta heterodimers associate head-to-tail to form protofilaments running lengthwise along the microtubule wall with the beta-tubulin subunit facing the microtubule plus end conferring a structural polarity. Microtubules usually have 13 protofilaments but different protofilament numbers can be found in some organisms and specialized cells. Requires Mg(2+) as cofactor.

It localises to the cytoplasm. It is found in the cytoskeleton. Functionally, tubulin is the major constituent of microtubules, a cylinder consisting of laterally associated linear protofilaments composed of alpha- and beta-tubulin heterodimers. Microtubules grow by the addition of GTP-tubulin dimers to the microtubule end, where a stabilizing cap forms. Below the cap, tubulin dimers are in GDP-bound state, owing to GTPase activity of alpha-tubulin. This is Tubulin beta chain from Trypanosoma cruzi.